Here is a 333-residue protein sequence, read N- to C-terminus: Mitochondrial glycine transporter (333 aa).

Residues Met1–Ser25 are disordered. Solcar repeat units follow at residues Pro26 to Ala109, Leu127 to Asp220, and Arg236 to Ser319. A run of 6 helical transmembrane segments spans residues Leu32–Gln57, Gly84–Val110, Leu133–Glu158, Gly195–Lys218, Ile240–Leu266, and Gly294–Ile312.

The protein belongs to the mitochondrial carrier (TC 2.A.29) family. SLC25A38 subfamily.

Its subcellular location is the mitochondrion inner membrane. It catalyses the reaction glycine(in) = glycine(out). Functionally, mitochondrial glycine transporter that imports glycine into the mitochondrial matrix. Plays an important role in providing glycine for the first enzymatic step in heme biosynthesis, the condensation of glycine with succinyl-CoA to produce 5-aminolevulinate (ALA) in the mitochondrial matrix. In Scheffersomyces stipitis (strain ATCC 58785 / CBS 6054 / NBRC 10063 / NRRL Y-11545) (Yeast), this protein is Mitochondrial glycine transporter.